A 146-amino-acid polypeptide reads, in one-letter code: Hemoglobin subunit beta (146 aa).

Position 1 is an N-acetylvaline (V1). Positions 2 to 146 constitute a Globin domain; the sequence is HLTAEEKSLV…VANALAHKYH (145 aa). A Phosphothreonine modification is found at T12. S44 is modified (phosphoserine). Position 59 is an N6-acetyllysine (K59). Heme b is bound at residue H63. Position 82 is an N6-acetyllysine (K82). H92 is a heme b binding site. At C93 the chain carries S-nitrosocysteine. K144 is modified (N6-acetyllysine).

It belongs to the globin family. As to quaternary structure, heterotetramer of two alpha chains and two beta chains. Red blood cells.

Involved in oxygen transport from the lung to the various peripheral tissues. In Vulpes vulpes (Red fox), this protein is Hemoglobin subunit beta (HBB).